The chain runs to 758 residues: 5-methyltetrahydropteroyltriglutamate--homocysteine methyltransferase (758 aa).

5-methyltetrahydropteroyltri-L-glutamate contacts are provided by residues 16-19 (RELK) and Lys112. L-homocysteine contacts are provided by residues 433-435 (IGS) and Glu486. L-methionine-binding positions include 433–435 (IGS) and Glu486. 5-methyltetrahydropteroyltri-L-glutamate is bound by residues 517-518 (RC) and Trp563. Asp601 provides a ligand contact to L-homocysteine. Asp601 is a binding site for L-methionine. Position 607 (Glu607) interacts with 5-methyltetrahydropteroyltri-L-glutamate. 3 residues coordinate Zn(2+): His643, Cys645, and Glu667. His696 (proton donor) is an active-site residue. A Zn(2+)-binding site is contributed by Cys728.

It belongs to the vitamin-B12 independent methionine synthase family. It depends on Zn(2+) as a cofactor.

The catalysed reaction is 5-methyltetrahydropteroyltri-L-glutamate + L-homocysteine = tetrahydropteroyltri-L-glutamate + L-methionine. It functions in the pathway amino-acid biosynthesis; L-methionine biosynthesis via de novo pathway; L-methionine from L-homocysteine (MetE route): step 1/1. Its function is as follows. Catalyzes the transfer of a methyl group from 5-methyltetrahydrofolate to homocysteine resulting in methionine formation. This is 5-methyltetrahydropteroyltriglutamate--homocysteine methyltransferase from Neisseria meningitidis serogroup A / serotype 4A (strain DSM 15465 / Z2491).